A 75-amino-acid chain; its full sequence is Protein SlyX homolog (75 aa).

This sequence belongs to the SlyX family.

The polypeptide is Protein SlyX homolog (Vibrio vulnificus (strain CMCP6)).